The primary structure comprises 368 residues: Putative agmatine deiminase (368 aa).

The active-site Amidino-cysteine intermediate is cysteine 359.

Belongs to the agmatine deiminase family.

The catalysed reaction is agmatine + H2O = N-carbamoylputrescine + NH4(+). The protein is Putative agmatine deiminase of Pectobacterium atrosepticum (strain SCRI 1043 / ATCC BAA-672) (Erwinia carotovora subsp. atroseptica).